Here is a 236-residue protein sequence, read N- to C-terminus: Endo-1,4-beta-xylanase 3 (236 aa).

An N-terminal signal peptide occupies residues 1–45; that stretch reads MQILTWALAALAAIPAVTAAPVETVEASSMDELVERSPNVTLVAR. Residues asparagine 39 and asparagine 106 are each glycosylated (N-linked (GlcNAc...) asparagine). Positions 46–236 constitute a GH11 domain; the sequence is GTPSSTGTHN…SSGSASMTVR (191 aa). Glutamate 131 functions as the Nucleophile in the catalytic mechanism. Catalysis depends on glutamate 223, which acts as the Proton donor.

It belongs to the glycosyl hydrolase 11 (cellulase G) family.

The protein localises to the secreted. The catalysed reaction is Endohydrolysis of (1-&gt;4)-beta-D-xylosidic linkages in xylans.. It functions in the pathway glycan degradation; xylan degradation. In terms of biological role, endo-1,4-beta-xylanase involved in the hydrolysis of xylan, a major structural heterogeneous polysaccharide found in plant biomass representing the second most abundant polysaccharide in the biosphere, after cellulose. The protein is Endo-1,4-beta-xylanase 3 (XYL3) of Pyricularia grisea (Crabgrass-specific blast fungus).